Reading from the N-terminus, the 311-residue chain is Lipoyl synthase (311 aa).

7 residues coordinate [4Fe-4S] cluster: Cys58, Cys63, Cys69, Cys84, Cys88, Cys91, and Ser298. The 218-residue stretch at 70 to 287 (FGHGTATFMI…EQEALAMGFR (218 aa)) folds into the Radical SAM core domain.

It belongs to the radical SAM superfamily. Lipoyl synthase family. Requires [4Fe-4S] cluster as cofactor.

It localises to the cytoplasm. The catalysed reaction is [[Fe-S] cluster scaffold protein carrying a second [4Fe-4S](2+) cluster] + N(6)-octanoyl-L-lysyl-[protein] + 2 oxidized [2Fe-2S]-[ferredoxin] + 2 S-adenosyl-L-methionine + 4 H(+) = [[Fe-S] cluster scaffold protein] + N(6)-[(R)-dihydrolipoyl]-L-lysyl-[protein] + 4 Fe(3+) + 2 hydrogen sulfide + 2 5'-deoxyadenosine + 2 L-methionine + 2 reduced [2Fe-2S]-[ferredoxin]. The protein operates within protein modification; protein lipoylation via endogenous pathway; protein N(6)-(lipoyl)lysine from octanoyl-[acyl-carrier-protein]: step 2/2. In terms of biological role, catalyzes the radical-mediated insertion of two sulfur atoms into the C-6 and C-8 positions of the octanoyl moiety bound to the lipoyl domains of lipoate-dependent enzymes, thereby converting the octanoylated domains into lipoylated derivatives. The polypeptide is Lipoyl synthase (Thiobacillus denitrificans (strain ATCC 25259 / T1)).